The primary structure comprises 401 residues: Deubiquitinase and deneddylase Dub1 (401 aa).

Residues 1–11 (MLSPTNSTSKT) show a composition bias toward polar residues. The tract at residues 1 to 24 (MLSPTNSTSKTAPVPPRDSSKPVL) is disordered. The chain crosses the membrane as a helical span at residues 40–60 (TALAVLLVVVTLGLILLFYSF). The interval 77 to 130 (KEQPTISIPVPLPSPPLAVPRPSTPPPPVISRPSTPSAPKPSTPPPLLPKAPKP) is disordered. Positions 86-128 (VPLPSPPLAVPRPSTPPPPVISRPSTPSAPKPSTPPPLLPKAP) are enriched in pro residues. Active-site residues include histidine 275, aspartate 292, and cysteine 345.

Belongs to the peptidase C48 family. Binds to host NFKBIA.

Its subcellular location is the secreted. It localises to the host cell. The protein resides in the membrane. Its function is as follows. Effector proteins function to alter host cell physiology and promote bacterial survival in host tissues. This protease possesses deubiquitinating and deneddylating activities. Impairs ubiquitination and degradation of NF-kappa-B inhibitor alpha (NFKBIA), thereby preventing NF-kappa-B activation. This chain is Deubiquitinase and deneddylase Dub1 (cdu1), found in Chlamydia trachomatis serovar L2 (strain ATCC VR-902B / DSM 19102 / 434/Bu).